The chain runs to 549 residues: Glucose-6-phosphate isomerase (549 aa).

Glu355 acts as the Proton donor in catalysis. Catalysis depends on residues His386 and Lys514.

The protein belongs to the GPI family.

The protein localises to the cytoplasm. The catalysed reaction is alpha-D-glucose 6-phosphate = beta-D-fructose 6-phosphate. It functions in the pathway carbohydrate biosynthesis; gluconeogenesis. Its pathway is carbohydrate degradation; glycolysis; D-glyceraldehyde 3-phosphate and glycerone phosphate from D-glucose: step 2/4. Functionally, catalyzes the reversible isomerization of glucose-6-phosphate to fructose-6-phosphate. The sequence is that of Glucose-6-phosphate isomerase from Aeromonas salmonicida (strain A449).